Here is a 315-residue protein sequence, read N- to C-terminus: MTAQTAPAFPHRHLLGIEGLSRPDIEALLERADAAVALSRQVEKKRTVLRGRTQINLFFEPSTRTQSSFELAGKRLGADVMNMSVASSSVKKGETLIDTAATLNAMRPDIIVVRHHAAGAVHLLARKVDCAVVNAGDGAHEHPTQALLDALTIRRNKGGIEGLQVAICGDVLHSRVARSNIILLQALGARVRVIGPSTLLPTGIERFGVEVFTDMRAGLKGCDIVMMLRLQRERMNGSFVPSVKEYFRYYGLDGDKLALAKPGALVMHPGPMNRGVEIASDIADGTQSLIREQVEMGVAVRMAVLEALATHLPNG.

Residues Arg64 and Thr65 each coordinate carbamoyl phosphate. Lys92 is a binding site for L-aspartate. Residues Arg114, His142, and Gln145 each coordinate carbamoyl phosphate. Residues Arg175 and Arg229 each contribute to the L-aspartate site. Carbamoyl phosphate-binding residues include Gly270 and Pro271.

The protein belongs to the aspartate/ornithine carbamoyltransferase superfamily. ATCase family. Heterododecamer (2C3:3R2) of six catalytic PyrB chains organized as two trimers (C3), and six regulatory PyrI chains organized as three dimers (R2).

It carries out the reaction carbamoyl phosphate + L-aspartate = N-carbamoyl-L-aspartate + phosphate + H(+). It functions in the pathway pyrimidine metabolism; UMP biosynthesis via de novo pathway; (S)-dihydroorotate from bicarbonate: step 2/3. In terms of biological role, catalyzes the condensation of carbamoyl phosphate and aspartate to form carbamoyl aspartate and inorganic phosphate, the committed step in the de novo pyrimidine nucleotide biosynthesis pathway. The sequence is that of Aspartate carbamoyltransferase catalytic subunit from Methylorubrum extorquens (strain CM4 / NCIMB 13688) (Methylobacterium extorquens).